We begin with the raw amino-acid sequence, 113 residues long: Integration host factor subunit alpha (113 aa).

Residues 88–113 (ALNGGVSDETEGADDDDDDEEGEGDE) are disordered. Positions 95-113 (DETEGADDDDDDEEGEGDE) are enriched in acidic residues.

Belongs to the bacterial histone-like protein family. In terms of assembly, heterodimer of an alpha and a beta chain.

Its function is as follows. This protein is one of the two subunits of integration host factor, a specific DNA-binding protein that functions in genetic recombination as well as in transcriptional and translational control. The chain is Integration host factor subunit alpha from Anaeromyxobacter dehalogenans (strain 2CP-C).